The sequence spans 395 residues: ATP phosphoribosyltransferase regulatory subunit (395 aa).

This sequence belongs to the class-II aminoacyl-tRNA synthetase family. HisZ subfamily. Heteromultimer composed of HisG and HisZ subunits.

The protein localises to the cytoplasm. The protein operates within amino-acid biosynthesis; L-histidine biosynthesis; L-histidine from 5-phospho-alpha-D-ribose 1-diphosphate: step 1/9. Required for the first step of histidine biosynthesis. May allow the feedback regulation of ATP phosphoribosyltransferase activity by histidine. The sequence is that of ATP phosphoribosyltransferase regulatory subunit from Pseudomonas fluorescens (strain Pf0-1).